Consider the following 333-residue polypeptide: Atrochrysone carboxyl ACP thioesterase MYCFIDRAFT_190111 (333 aa).

Zn(2+)-binding residues include histidine 108, histidine 110, aspartate 112, and histidine 113. Catalysis depends on aspartate 112, which acts as the Proton donor/acceptor.

The protein belongs to the metallo-beta-lactamase superfamily. Requires Zn(2+) as cofactor.

The enzyme catalyses atrochrysone carboxyl-[ACP] + H2O = atrochrysone carboxylate + holo-[ACP] + H(+). The protein operates within secondary metabolite biosynthesis. Its function is as follows. Atrochrysone carboxyl ACP thioesterase; part of the gene cluster that mediates the biosynthesis of an emodin derivative that may be involved in black Sigatoka disease of banana. The pathway begins with the synthesis of atrochrysone thioester by the polyketide synthase PKS8-1. The atrochrysone carboxyl ACP thioesterase MYCFIDRAFT_190111 then breaks the thioester bond and releases the atrochrysone carboxylic acid from PKS8-1. The decarboxylase MYCFIDRAFT_34057 then catalyzes the concerted decarboxylation-elimination required to convert atochrysone carboxylic acid into emodin anthrone, which is further oxidized to emodin by the anthrone oxygenase MYCFIDRAFT_34418. The functions of the other tailoring enzymes as well as the final product of the cluster have still to be identified. The protein is Atrochrysone carboxyl ACP thioesterase MYCFIDRAFT_190111 of Pseudocercospora fijiensis (strain CIRAD86) (Black leaf streak disease fungus).